The following is a 446-amino-acid chain: Phosphoglucosamine mutase (446 aa).

Catalysis depends on Ser-100, which acts as the Phosphoserine intermediate. 4 residues coordinate Mg(2+): Ser-100, Asp-239, Asp-241, and Asp-243. At Ser-100 the chain carries Phosphoserine.

Belongs to the phosphohexose mutase family. The cofactor is Mg(2+). In terms of processing, activated by phosphorylation.

It catalyses the reaction alpha-D-glucosamine 1-phosphate = D-glucosamine 6-phosphate. Functionally, catalyzes the conversion of glucosamine-6-phosphate to glucosamine-1-phosphate. This is Phosphoglucosamine mutase from Shouchella clausii (strain KSM-K16) (Alkalihalobacillus clausii).